Here is a 94-residue protein sequence, read N- to C-terminus: Co-chaperonin GroES (94 aa).

This sequence belongs to the GroES chaperonin family. As to quaternary structure, heptamer of 7 subunits arranged in a ring. Interacts with the chaperonin GroEL.

It is found in the cytoplasm. Its function is as follows. Together with the chaperonin GroEL, plays an essential role in assisting protein folding. The GroEL-GroES system forms a nano-cage that allows encapsulation of the non-native substrate proteins and provides a physical environment optimized to promote and accelerate protein folding. GroES binds to the apical surface of the GroEL ring, thereby capping the opening of the GroEL channel. This Leuconostoc citreum (strain KM20) protein is Co-chaperonin GroES.